The following is a 133-amino-acid chain: uncharacterized protein (133 aa).

Residues 3 to 106 (IFTKIINREL…PTRSLSDFGF (104 aa)) form the HIT domain. Positions 90–94 (HLHIH) match the Histidine triad motif motif.

This is an uncharacterized protein from Mycobacterium tuberculosis (strain ATCC 25618 / H37Rv).